The sequence spans 427 residues: MNSLEYLIANPHILSDTTLTDALAALASSTNVENQDEEFDMEVNSDDEMKIDLSALINPSVFNALQLPIGTGRFPNPSPPRSSSGTNTPIRKTPGSRPDRGKFTILDNAEVAGPEEVLNVNFDSEILQRIFSDPKLGIQFLARYGLIPNTRVCRVQDCPKDQLMSLIKHANGFVWRCRSCRKRREKRIITKISVYEGTFLFYSRMPLNKFFIFMLNWCENPGLSITEYNRLMGENRLVEETIYNTIGFMRDIIQNWCDTIISSHVPIGGPHRVVEVVETLSTEQLSNKTRNRRTRHYTTRTVFISLADDKIKSVDFPLHNVNDLERALLECVQPGSIIVMRDSFMERFGQQEEISNALFNHYKVKSICDVWPDFNERERNKQYIKTEMNQVPNVNQEPYAYEYFFRRCFADKCFNHLLRVIRLLYQK.

A disordered region spans residues 68-102 (PIGTGRFPNPSPPRSSSGTNTPIRKTPGSRPDRGK).

The protein localises to the nucleus. Putative transcription factor. Acts in a TGF-beta-like pathway during development of male-specific genital sensilla (simple sense organs), known as rays. Involved in production of reactive oxygen species (ROS), acting downstream of the TGF-beta-like dbl-1 signaling pathway. Involved in locomotory behavior. In Caenorhabditis elegans, this protein is Male abnormal protein mab-31.